A 399-amino-acid polypeptide reads, in one-letter code: Argininosuccinate synthase (399 aa).

An ATP-binding site is contributed by 8-16 (AYSGGLDTS). Y87 and S92 together coordinate L-citrulline. G117 contributes to the ATP binding site. L-aspartate is bound by residues T119, N123, and D124. Residue N123 participates in L-citrulline binding. The L-citrulline site is built by R127, S176, S185, E261, and Y273.

It belongs to the argininosuccinate synthase family. Type 1 subfamily. Homotetramer.

The protein localises to the cytoplasm. It carries out the reaction L-citrulline + L-aspartate + ATP = 2-(N(omega)-L-arginino)succinate + AMP + diphosphate + H(+). It participates in amino-acid biosynthesis; L-arginine biosynthesis; L-arginine from L-ornithine and carbamoyl phosphate: step 2/3. The protein is Argininosuccinate synthase of Clostridioides difficile (strain 630) (Peptoclostridium difficile).